Consider the following 160-residue polypeptide: Heat shock protein beta-6 (160 aa).

The segment at 1 to 72 is involved in stabilization of the HSPB1:HSBP6 heterodimer; sequence MEIPVPVQPS…PVAQVPTDPG (72 aa). Ser-16 is modified (phosphoserine; by PKA). Positions 55–160 constitute a sHSP domain; the sequence is LRAPSVALPV…AQAPPPAAAK (106 aa). Position 66 is a deamidated glutamine (Gln-66).

Belongs to the small heat shock protein (HSP20) family. In terms of assembly, homodimer. Small heat shock proteins form high molecular mass oligomers containing variable number of monomers; these oligomers display a very flexible quaternary structure easily exchanging their subunits. Heterooligomer with HSPB1; formed through oligomerization of HSPB1:HSBP6 dimers; subunit exchange leads to formation of at least two different heterooligomeric complexes, differing in variable quantities of HSPB1 and HSPB6 homodimers in addition to HSPB1:HSPB6 heterodimers. Heterooligomer with CRYAB; large heterooligomers consist of CRYAB homodimers and HSPB5:HSPB6 heterodimers but lacking HSPB6 homodimers. Interacts with BAG3. Interacts (phosphorylated) with YWHAZ. Interacts with PDE4A and PDE4D; required for maintenance of the non-phosphorylated state of HSPB6 under basal conditions. Interacts with KDR. Interacts with PRKD1. The N-terminus is blocked. Post-translationally, phosphorylated at Ser-16 by PKA and probably PKD1K; required to protect cardiomyocytes from apoptosis.

The protein localises to the cytoplasm. It is found in the nucleus. It localises to the secreted. Small heat shock protein which functions as a molecular chaperone probably maintaining denatured proteins in a folding-competent state. Seems to have versatile functions in various biological processes. Plays a role in regulating muscle function such as smooth muscle vasorelaxation and cardiac myocyte contractility. May regulate myocardial angiogenesis implicating KDR. Overexpression mediates cardioprotection and angiogenesis after induced damage. Stabilizes monomeric YWHAZ thereby supporting YWHAZ chaperone-like activity. The chain is Heat shock protein beta-6 (HSPB6) from Homo sapiens (Human).